Reading from the N-terminus, the 551-residue chain is Probable malate:quinone oxidoreductase (551 aa).

The span at 525–544 shows a compositional bias: low complexity; that stretch reads QTAAAAPQAQPQLKPQPDAK. The segment at 525–551 is disordered; that stretch reads QTAAAAPQAQPQLKPQPDAKPVADIAL.

It belongs to the MQO family. The cofactor is FAD.

It catalyses the reaction (S)-malate + a quinone = a quinol + oxaloacetate. It functions in the pathway carbohydrate metabolism; tricarboxylic acid cycle; oxaloacetate from (S)-malate (quinone route): step 1/1. This Enterobacter sp. (strain 638) protein is Probable malate:quinone oxidoreductase.